A 253-amino-acid chain; its full sequence is Chloride intracellular channel protein 4 (253 aa).

An N-acetylalanine modification is found at alanine 2. Residues 2-101 (ALSMPLNGLK…EEFLEEVLCP (100 aa)) are required for insertion into the membrane. A Phosphoserine modification is found at serine 4. Lysine 24 is modified (N6-acetyllysine). Residues 35–38 (CPFS) carry the G-site motif. Residues 37–57 (FSQRLFMILWLKGVVFSVTTV) traverse the membrane as a helical segment. The 164-residue stretch at 81 to 244 (NSEVKTDVNK…PSDKEVEIAY (164 aa)) folds into the GST C-terminal domain. The residue at position 130 (lysine 130) is an N6-acetyllysine. Residues serine 132, serine 167, and serine 236 each carry the phosphoserine modification. Residue tyrosine 244 is modified to Phosphotyrosine.

It belongs to the chloride channel CLIC family. As to quaternary structure, component of a multimeric complex consisting of several cytoskeletal proteins, including actin, ezrin, alpha-actinin, gelsolin, IQGAP1 and CLIC5A. Binds directly to brain dynamin I in a complex containing actin, tubulin and 14-3-3 isoforms. Monomer. Interacts with HRH3. Interacts with AKAP9. In terms of tissue distribution, detected in epithelial cells from colon, esophagus and kidney (at protein level). Expression is prominent in heart, kidney, placenta and skeletal muscle.

It is found in the cytoplasm. Its subcellular location is the cytoskeleton. The protein resides in the microtubule organizing center. The protein localises to the centrosome. It localises to the cytoplasmic vesicle membrane. It is found in the nucleus. Its subcellular location is the cell membrane. The protein resides in the mitochondrion. The protein localises to the cell junction. It localises to the endoplasmic reticulum membrane. The catalysed reaction is chloride(in) = chloride(out). The enzyme catalyses thiocyanate(in) = thiocyanate(out). It catalyses the reaction nitrate(in) = nitrate(out). It carries out the reaction iodide(out) = iodide(in). The catalysed reaction is bromide(in) = bromide(out). The enzyme catalyses fluoride(in) = fluoride(out). It catalyses the reaction choline(out) = choline(in). Inhibited by rapamycin, amphotericin B and IAA-94. In terms of biological role, in the soluble state, catalyzes glutaredoxin-like thiol disulfide exchange reactions with reduced glutathione as electron donor. Can insert into membranes and form voltage-dependent multi-ion conductive channels. Membrane insertion seems to be redox-regulated and may occur only under oxidizing conditions. Has alternate cellular functions like a potential role in angiogenesis or in maintaining apical-basolateral membrane polarity during mitosis and cytokinesis. Could also promote endothelial cell proliferation and regulate endothelial morphogenesis (tubulogenesis). Promotes cell-surface expression of HRH3. The sequence is that of Chloride intracellular channel protein 4 from Homo sapiens (Human).